The chain runs to 365 residues: Probable dual-specificity RNA methyltransferase RlmN (365 aa).

Catalysis depends on Glu111, which acts as the Proton acceptor. The Radical SAM core domain occupies 117-351; sequence ADDRMTACIS…VNIRRSRGKD (235 aa). An intrachain disulfide couples Cys124 to Cys356. 3 residues coordinate [4Fe-4S] cluster: Cys131, Cys135, and Cys138. S-adenosyl-L-methionine is bound by residues 182 to 183, Ser214, 237 to 239, and Asn313; these read GE and SLH. Cys356 functions as the S-methylcysteine intermediate in the catalytic mechanism.

Belongs to the radical SAM superfamily. RlmN family. Requires [4Fe-4S] cluster as cofactor.

It is found in the cytoplasm. The enzyme catalyses adenosine(2503) in 23S rRNA + 2 reduced [2Fe-2S]-[ferredoxin] + 2 S-adenosyl-L-methionine = 2-methyladenosine(2503) in 23S rRNA + 5'-deoxyadenosine + L-methionine + 2 oxidized [2Fe-2S]-[ferredoxin] + S-adenosyl-L-homocysteine. The catalysed reaction is adenosine(37) in tRNA + 2 reduced [2Fe-2S]-[ferredoxin] + 2 S-adenosyl-L-methionine = 2-methyladenosine(37) in tRNA + 5'-deoxyadenosine + L-methionine + 2 oxidized [2Fe-2S]-[ferredoxin] + S-adenosyl-L-homocysteine. Its function is as follows. Specifically methylates position 2 of adenine 2503 in 23S rRNA and position 2 of adenine 37 in tRNAs. The polypeptide is Probable dual-specificity RNA methyltransferase RlmN (Cytophaga hutchinsonii (strain ATCC 33406 / DSM 1761 / CIP 103989 / NBRC 15051 / NCIMB 9469 / D465)).